The following is a 245-amino-acid chain: tRNA pseudouridine synthase A (245 aa).

Aspartate 52 functions as the Nucleophile in the catalytic mechanism. A substrate-binding site is contributed by tyrosine 111.

It belongs to the tRNA pseudouridine synthase TruA family. As to quaternary structure, homodimer.

The catalysed reaction is uridine(38/39/40) in tRNA = pseudouridine(38/39/40) in tRNA. Formation of pseudouridine at positions 38, 39 and 40 in the anticodon stem and loop of transfer RNAs. The protein is tRNA pseudouridine synthase A of Thermotoga neapolitana (strain ATCC 49049 / DSM 4359 / NBRC 107923 / NS-E).